We begin with the raw amino-acid sequence, 938 residues long: MSDYKSTLNLPETGFPMRGDLAKREPGMLARWTDDDLYGIIRAAKKGKKTFILHDGPPYANGSIHIGHSVNKILKDIIIKSKGLSGYDSPYVPGWDCHGLPIELKVEQEYGKPGEKFTAAEFRAKCREYAATQVDGQRKDFIRLGVLGDWSHPYLTMDFKTEANIIRALGKIIGNGHLHKGAKPVHWCVDCRSALAEAEVEYYDKTSPSIDVAFLAVDQDALKTKFGVSNVNGPISLVIWTTTPWTLPANRAISIAPDFDYALVQIDGQAVILAKDLVESVMQRIGVSDYTILGTVKGAELELLRFTHPFMDFDVPAILGDHVTLDAGTGAVHTAPGHGPDDYVIGQKYGLETANPVGPDGTYLPGTYPTLDGVNVFKANDIVIALLQEKGALLHVEKMQHSYPCCWRHKTPIIFRATPQWFVSMDQKGLRAQSLKEIKGVQWIPDWGQARIESMVANRPDWCISRQRTWGVPMSLFVHKDTEELHPRTLELMEEVAKRVEVDGIQAWWDLDAKEILGDEADQYVKVPDTLDVWFDSGSTHSSVVDVRPEFAGHAADMYLEGSDQHRGWFMSSLMISTAMKGKAPYRQVLTHGFTVDGQGRKMSKSIGNTVSPQDVMNKLGADILRLWVASTDYTGEMAVSDEILKRAADSYRRIRNTARFLLANLNGFDPAKDMVKPEEMVVLDRWAVGCAKAAQEDILKAYEAYDFHEVVQRLMRFCSVEMGSFYLDIIKDRQYTAKADSVARRSCQTALYHIAEALVRWMAPILSFTADEVWGYLPGEREKYVFTGEWYEGLFGLADSEAMNDAFWDELLKVRGEVNKVIEQARADKKVGGSLEAAVTLYAEPELAAKLTALGDELRFVLLTSGATVADYNDAPADAQQSEVLKGLKVALSKAEGEKCPRCWHYTQDVGKVAEHAEICGRCVSNVAGDGEKRKFA.

The 'HIGH' region signature appears at 58-68; it reads PYANGSIHIGH. Residue lysine 183 is modified to N6-acetyllysine. Position 561 (glutamate 561) interacts with L-isoleucyl-5'-AMP. The 'KMSKS' region signature appears at 602–606; the sequence is KMSKS. Lysine 605 contacts ATP. Zn(2+) is bound by residues cysteine 901, cysteine 904, cysteine 921, and cysteine 924.

This sequence belongs to the class-I aminoacyl-tRNA synthetase family. IleS type 1 subfamily. Monomer. It depends on Zn(2+) as a cofactor.

It is found in the cytoplasm. It catalyses the reaction tRNA(Ile) + L-isoleucine + ATP = L-isoleucyl-tRNA(Ile) + AMP + diphosphate. In terms of biological role, catalyzes the attachment of isoleucine to tRNA(Ile). As IleRS can inadvertently accommodate and process structurally similar amino acids such as valine, to avoid such errors it has two additional distinct tRNA(Ile)-dependent editing activities. One activity is designated as 'pretransfer' editing and involves the hydrolysis of activated Val-AMP. The other activity is designated 'posttransfer' editing and involves deacylation of mischarged Val-tRNA(Ile). In Escherichia coli O45:K1 (strain S88 / ExPEC), this protein is Isoleucine--tRNA ligase.